The sequence spans 261 residues: Indole-3-glycerol phosphate synthase (261 aa).

It belongs to the TrpC family.

It catalyses the reaction 1-(2-carboxyphenylamino)-1-deoxy-D-ribulose 5-phosphate + H(+) = (1S,2R)-1-C-(indol-3-yl)glycerol 3-phosphate + CO2 + H2O. It participates in amino-acid biosynthesis; L-tryptophan biosynthesis; L-tryptophan from chorismate: step 4/5. The polypeptide is Indole-3-glycerol phosphate synthase (Paraburkholderia phymatum (strain DSM 17167 / CIP 108236 / LMG 21445 / STM815) (Burkholderia phymatum)).